The sequence spans 293 residues: 4-diphosphocytidyl-2-C-methyl-D-erythritol kinase (293 aa).

K16 is a catalytic residue. ATP is bound at residue 99–109 (PMGAGLGGGSS). The active site involves D141.

It belongs to the GHMP kinase family. IspE subfamily.

The enzyme catalyses 4-CDP-2-C-methyl-D-erythritol + ATP = 4-CDP-2-C-methyl-D-erythritol 2-phosphate + ADP + H(+). Its pathway is isoprenoid biosynthesis; isopentenyl diphosphate biosynthesis via DXP pathway; isopentenyl diphosphate from 1-deoxy-D-xylulose 5-phosphate: step 3/6. Catalyzes the phosphorylation of the position 2 hydroxy group of 4-diphosphocytidyl-2C-methyl-D-erythritol. The polypeptide is 4-diphosphocytidyl-2-C-methyl-D-erythritol kinase (Burkholderia ambifaria (strain MC40-6)).